The sequence spans 370 residues: Ubiquitin carboxyl-terminal hydrolase 12 (370 aa).

The Required for plasma membrane localization of USP12/WDR20 motif lies at 1-4; that stretch reads MEIL. Residues 39–369 form the USP domain; that stretch reads FGLVNFGNTC…SGYILFYQSR (331 aa). The active-site Nucleophile is the C48. The span at 146–157 shows a compositional bias: basic and acidic residues; sequence QEKQNGRLRNGD. Positions 146 to 168 are disordered; sequence QEKQNGRLRNGDVDSEDNNSTPD. Positions 186, 189, 233, and 236 each coordinate Zn(2+). The Proton acceptor role is filled by H317.

The protein belongs to the peptidase C19 family. USP12/USP46 subfamily. Interacts with WDR48. Interacts with WDR20; this interaction promotes translocation of the USP12 complex to the plasma membrane. Component of the USP12-WDR20-WDR48 deubiquitinating complex. Component of the USP12-DMWD-WDR48 deubiquitinating complex. Interacts with PHLPP1. Interacts with RBPJ. Interacts with CBP; this interaction blocks the acetyltransferase activity of CREBBP. Interacts with ITCH; the interaction is more efficient when both USP12 and WDR48/UAF1 are involved and may mediate recruitment of the USP12 deubiquitinating complex to Notch.

It is found in the nucleus. It localises to the cytoplasm. The protein localises to the cell membrane. It catalyses the reaction Thiol-dependent hydrolysis of ester, thioester, amide, peptide and isopeptide bonds formed by the C-terminal Gly of ubiquitin (a 76-residue protein attached to proteins as an intracellular targeting signal).. Its activity is regulated as follows. Activated by interaction with WDR20, WDR48 and DMWD through different allosteric mechanisms. Functionally, deubiquitinating enzyme that plays various roles in the regulation of the immune response and inflammation. During TCR engagement and activation, translocates into the cytoplasm and deubiquitinates its substrates LAT and TRAT1 and prevents their lysosome-dependent degradation to stabilize the TCR signaling complex at the plasma membrane. Plays an essential role in the selective LPS-induced macrophage response through the activation of NF-kappa-B pathway. In addition, promotes that antiviral immune response through targeting DNA sensor IFI16 to inhibit its proteasome-dependent degradation. Participates in the interferon signaling pathway and antiviral response independently of its deubiquitinase activity by maintaining nuclear phosphorylated STAT1 levels via inhibition of its CREBBP-mediated acetylation and subsequent dephosphorylation. Plays an intrinsic role in promoting the differentiation, activation and proliferation of CD4(+) T-cell by activating the NF-kappa-B signaling pathway through deubiquitinating and stabilizing B-cell lymphoma/leukemia 10/BCL10. In myeloid-derived suppressor cells promotes the activation of the NF-kappa-B via deubiquitination and stabilization of RELA. Regulates the 'Lys-63'-linked polyubiquitin chains of BAX and thereby modulates the mitochondrial apoptotic process. Negative regulator of NOTCH signaling that specifically deubiquitinates non-activated NOTCH receptors to target them for lysosomal degradation; deubiquitination of NOTCH stimulates its transport form late endosomes to lysosomes. Protects neurons against HTT/huntingtin-induced polyglutamine expansion-dependent neurodegeneration through regulation of autophagic flux. This function is independent of deubiquitinase activity or of other components of the USP12-WDR20-WDR48 deubiquitinating complex. In complex with WDR48, acts as a potential tumor suppressor by positively regulating PHLPP1 stability. The chain is Ubiquitin carboxyl-terminal hydrolase 12 from Rattus norvegicus (Rat).